A 278-amino-acid polypeptide reads, in one-letter code: MSSLGSPVRAYDFLLKFLLVGDSDVGKGEILASLQDGAAESPYGHPAGIDHKTTTILLDGRRVKLQLWDTSGQGRFCTIFRSYSRGAQGVVLVYDIANRWSFDGINRWIKEIDEHAPGVPKILVGNRLHLAFKRQVPTEQAQAYAERLGVTFFEVSPLCNFNITESFTELARIVLLRHGMDRLWRPSKVLSLQELCCRAVVSCTPGHLVDKLPLPVALRSHLKSFSMASGLNTRMMHGRSYSLTANSSHKRNSFRKVRTIRPPQSPPRNCARNSCKIS.

3 residues coordinate GTP: serine 23, glycine 26, and lysine 27. Residues 41–49 (SPYGHPAGI) form a switch-I region. Aspartate 69 contributes to the Mg(2+) binding site. GTP-binding residues include glycine 72, asparagine 126, and arginine 127. The switch-II stretch occupies residues 72-88 (GQGRFCTIFRSYSRGAQ). One can recognise an SOCS box domain in the interval 175 to 228 (LLRHGMDRLWRPSKVLSLQELCCRAVVSCTPGHLVDKLPLPVALRSHLKSFSMA). Residues 245-278 (ANSSHKRNSFRKVRTIRPPQSPPRNCARNSCKIS) are disordered. Positions 248-259 (SHKRNSFRKVRT) are enriched in basic residues. Cysteine 270 carries S-palmitoyl cysteine lipidation. A lipid anchor (S-geranylgeranyl cysteine) is attached at cysteine 275.

It belongs to the small GTPase superfamily. Rab family. Component of the cullin-5-RING E3 ubiquitin-protein ligase complex (ECS(RAB40B) complex) composed of CUL5, Elongin BC (ELOB and ELOC), RNF7/RBX2 and RAB40B; RAB40B interaction with ECS complex is GTP-independent. Binds (GTP-bound) LIMA1; interaction promotes LIMA1 subcellular localization in lamellipodia during cell migration. Interacts (GTP-bound) with TKS5/SH3PXD2A (via PX domain); interaction promotes invadopodia-mediated extracellular matrix degradation. Requires Mg(2+) as cofactor.

It localises to the cell membrane. The protein resides in the cytoplasm. The protein localises to the cytosol. Its subcellular location is the cell projection. It is found in the lamellipodium membrane. It localises to the ruffle. It catalyses the reaction GTP + H2O = GDP + phosphate + H(+). It participates in protein modification; protein ubiquitination. With respect to regulation, regulated by guanine nucleotide exchange factors (GEFs) which promote the exchange of bound GDP for free GTP. Regulated by GTPase activating proteins (GAPs) which increase the GTP hydrolysis activity. Inhibited by GDP dissociation inhibitors (GDIs). In terms of biological role, RAB40B small GTPase acts as substrate-recognition components of the ECS(RAB40B) E3 ubiquitin ligase complex which mediates the ubiquitination of target proteins. The Rab40 subfamily belongs to the Rab family that are key regulators of intracellular membrane trafficking, from the formation of transport vesicles to their fusion with membranes. Rabs cycle between an inactive GDP-bound form and an active GTP-bound form that is able to recruit to membranes different sets of downstream effectors directly responsible for vesicle formation, movement, tethering and fusion. As part of the ECS(RAB40B) complex, GTP-bound RAB40B promotes LIMA1/EPLIN ubiquitination and degradation, thereby regulating leading-edge actin dynamics during cell migration. As part of the ECS(RAB40B) complex, GTP-bound RAB40B also ubiquitinates RAP2A GTPase which promotes its localization to lamellipodia and activation to drive cell migration. The ECS(RAB40B) complex does not mediate canonical ubiquitin-dependent degradation of RAP2. RAB40B also binds TKS5/SH3PXD2A effector independently from ECS complex to promote invadopodia-mediated extracellular matrix degradation. This chain is Ras-related protein Rab-40B, found in Mus musculus (Mouse).